The sequence spans 781 residues: MLARAPPPYFNFPARNNTICNRNEIVRLFRNGGGVVARGAGFTRRPLETSSSYDDSTDDGFVIISAADKENEFAPPPSSDLLSSIPSESARRNGSRSRGLTASFGRLKAQKVKALVGKVTQKKQHMSHNEEEDEDDASDENYSADEGFGSSSILDLMRKKLAMKAIPRSGKSAERNEVKRASKVRESRESRRDLDRLEGDDEDVDEVSNPDRFTDNQRAGSRSSYSKGGYAANSRGKGDRLSVARDLDSFEGHGRAIDEVSNPRKFNDNERAESRSSYSRDSSANSRGREDRRFVAKELDTFQGRDKAYDEVYNPRRFTDNERGLRGGSHSKGSDTNSRGWGDRRSVVYTRDMDDWRERNKTKDTRETGFFSRKTFAEIGCSEDMMKALKEQNFDRPAHIQAMAFSPVIDGKSCIIADQSGSGKTLAYLVPVIQRLREEELQGHSKSSPGCPRVIVLVPTAELASQVLANCRSISKSGVPFRSMVVTGGFRQRTQLENLEQGVDVLIATPGRFTYLMNEGILGLSNLRCAILDEVDILFGDDEFEAALQNLINSSPVTAQYLFVTATLPLEIYNKLVEVFPDCEVVMGPRVHRVSNALEEFLVDCSGDDNAEKTPETAFQNKKTALLQIMEENPVSKTIIFCNKIETCRKVENIFKRVDRKERQLHVLPFHAALSQESRLTNMQEFTSSQPEENSLFLVCTDRASRGIDFSGVDHVVLFDFPRDPSEYVRRVGRTARGARGKGKAFIFVVGKQVGLARRIIERNEKGHPVHDVPNAYEFTT.

Disordered stretches follow at residues 72–103 (EFAPPPSSDLLSSIPSESARRNGSRSRGLTAS), 117–148 (GKVTQKKQHMSHNEEEDEDDASDENYSADEGF), 166–240 (IPRS…KGDR), 254–292 (GRAIDEVSNPRKFNDNERAESRSSYSRDSSANSRGREDR), and 313–342 (YNPRRFTDNERGLRGGSHSKGSDTNSRGWG). The span at 79–88 (SDLLSSIPSE) shows a compositional bias: low complexity. The span at 130–143 (EEEDEDDASDENYS) shows a compositional bias: acidic residues. The span at 171 to 197 (KSAERNEVKRASKVRESRESRRDLDRL) shows a compositional bias: basic and acidic residues. A compositionally biased stretch (acidic residues) spans 198–208 (EGDDEDVDEVS). Polar residues predominate over residues 216 to 226 (NQRAGSRSSYS). Residues 254–274 (GRAIDEVSNPRKFNDNERAES) are compositionally biased toward basic and acidic residues. The segment covering 275–286 (RSSYSRDSSANS) has biased composition (low complexity). Basic and acidic residues predominate over residues 313–325 (YNPRRFTDNERGL). The Q motif motif lies at 374 to 402 (KTFAEIGCSEDMMKALKEQNFDRPAHIQA). The Helicase ATP-binding domain occupies 405–586 (FSPVIDGKSC…VEVFPDCEVV (182 aa)). 418–425 (DQSGSGKT) serves as a coordination point for ATP. Positions 533 to 536 (DEVD) match the DEAD box motif. The region spanning 621-781 (NKKTALLQIM…DVPNAYEFTT (161 aa)) is the Helicase C-terminal domain.

Belongs to the DEAD box helicase family.

The catalysed reaction is ATP + H2O = ADP + phosphate + H(+). In terms of biological role, probably involved in resistance to biotic and abiotic stresses. The chain is DEAD-box ATP-dependent RNA helicase 50 (RH50) from Arabidopsis thaliana (Mouse-ear cress).